The sequence spans 64 residues: Non-structural protein 3b (64 aa).

The chain is Non-structural protein 3b from Avian infectious bronchitis virus (strain M41) (IBV).